A 309-amino-acid chain; its full sequence is GTP cyclohydrolase MptA 2 (309 aa).

Belongs to the GTP cyclohydrolase IV family. Homodimer. Fe(2+) serves as cofactor.

It carries out the reaction GTP + H2O = 7,8-dihydroneopterin 2',3'-cyclic phosphate + formate + diphosphate + H(+). Its pathway is cofactor biosynthesis; 5,6,7,8-tetrahydromethanopterin biosynthesis. In terms of biological role, converts GTP to 7,8-dihydro-D-neopterin 2',3'-cyclic phosphate, the first intermediate in the biosynthesis of coenzyme methanopterin. The protein is GTP cyclohydrolase MptA 2 of Methanocella arvoryzae (strain DSM 22066 / NBRC 105507 / MRE50).